A 216-amino-acid chain; its full sequence is Orotate phosphoribosyltransferase (216 aa).

5-phospho-alpha-D-ribose 1-diphosphate-binding positions include Arg101, Lys105, His107, and 127–135 (EDLISTGGS). Position 131 (Ser131) interacts with orotate.

This sequence belongs to the purine/pyrimidine phosphoribosyltransferase family. PyrE subfamily. In terms of assembly, homodimer. Requires Mg(2+) as cofactor.

The catalysed reaction is orotidine 5'-phosphate + diphosphate = orotate + 5-phospho-alpha-D-ribose 1-diphosphate. It functions in the pathway pyrimidine metabolism; UMP biosynthesis via de novo pathway; UMP from orotate: step 1/2. Catalyzes the transfer of a ribosyl phosphate group from 5-phosphoribose 1-diphosphate to orotate, leading to the formation of orotidine monophosphate (OMP). The chain is Orotate phosphoribosyltransferase from Cutibacterium acnes (strain DSM 16379 / KPA171202) (Propionibacterium acnes).